A 55-amino-acid polypeptide reads, in one-letter code: Large ribosomal subunit protein bL32 (55 aa).

Positions 1–27 are disordered; that stretch reads MAVQQNKPTRSKRGMRRSHDALTTATL.

This sequence belongs to the bacterial ribosomal protein bL32 family.

This Yersinia enterocolitica serotype O:8 / biotype 1B (strain NCTC 13174 / 8081) protein is Large ribosomal subunit protein bL32.